A 427-amino-acid chain; its full sequence is C4-dicarboxylate TRAP transporter large permease protein DctM (427 aa).

The next 13 membrane-spanning stretches (helical) occupy residues 2 to 22 (TILF…PIAV), 55 to 75 (TLLA…GGVA), 91 to 111 (GGLA…SGSS), 115 to 135 (VAAV…PQAF), 138 to 158 (GIVC…VMVV), 171 to 191 (FIAG…VIYI), 216 to 236 (ALWG…GAFT), 237 to 257 (PTEA…FVYR), 274 to 294 (LTIM…VLTT), 310 to 330 (LSPW…GNFM), 335 to 355 (IILI…IDPI), 359 to 379 (IIMV…LNLF), and 396 to 416 (ALPW…IPAV).

Belongs to the TRAP transporter large permease family. The complex comprises the extracytoplasmic solute receptor protein DctP, and the two transmembrane proteins DctQ and DctM.

The protein resides in the cell inner membrane. Its function is as follows. Part of the tripartite ATP-independent periplasmic (TRAP) transport system DctPQM involved in C4-dicarboxylates uptake. The chain is C4-dicarboxylate TRAP transporter large permease protein DctM from Pseudomonas aeruginosa (strain ATCC 15692 / DSM 22644 / CIP 104116 / JCM 14847 / LMG 12228 / 1C / PRS 101 / PAO1).